Here is a 490-residue protein sequence, read N- to C-terminus: CUGBP Elav-like family member 1 (490 aa).

RRM domains are found at residues 16–99 (IKMF…PADS) and 108–188 (RKLF…FADT). Residues 283 to 312 (PSAGSALTTSSSPLSILTSSGSSPSSNNNS) form a disordered region. Residues 405 to 483 (ANLFIYHLPQ…KRLKVQLKRS (79 aa)) enclose the RRM 3 domain.

This sequence belongs to the CELF/BRUNOL family. Oligomer. Oligomerization is required for RNA-binding and EDEN-dependent deadenylation. Post-translationally, phosphorylated during oocyte maturation and dephosphorylated following egg activation. Dephosphorylation is calcium dependent and correlates with the increase in the activity of EDEN-dependent deadenylation.

It localises to the nucleus. The protein localises to the cytoplasm. RNA-binding protein implicated in the regulation of several post-transcriptional events. May be involved in pre-mRNA alternative splicing, mRNA translation activation and stability. Mediates the rapid and sequence-specific cytoplasmic deadenylation of EDEN-containing maternal mRNAs following fertilization. Binds to AU-rich sequences (AREs) of jun mRNA. Binds to the embryonic deadenylation element (EDEN) motif localized in the 3'-UTR of maternal mRNAs. Binds to RNA containing several repeats of the consensus sequence 5'-UGU-3'. EDEN-dependent deadenylation is enhanced by the presence of an additional cis element composed of three AUU repeats. The chain is CUGBP Elav-like family member 1 (celf1) from Xenopus tropicalis (Western clawed frog).